Here is a 1086-residue protein sequence, read N- to C-terminus: Bifunctional helicase and thymine dioxygenase JBP2 (1086 aa).

Residues 1 to 518 are thymine dioxygenase; sequence MPVPSHVSVA…PPIYLPGRLL (518 aa). A disordered region spans residues 187–220; it reads DESNRGVLFNSDSFGNGRGGSSISSSERSVDEND. 3 residues coordinate Fe cation: His-393, Asp-395, and His-443. Arg-457 contacts 2-oxoglutarate. A DNA Helicase region spans residues 519–1084; the sequence is EVLSPVQQAA…RHGDTVRSES (566 aa). One can recognise a Helicase ATP-binding domain in the interval 533–708; it reads VDRLSKGNGC…YRLIGWINSD (176 aa). 546–553 serves as a coordination point for ATP; it reads LTMGLGKT. The DEAH box motif lies at 659-662; the sequence is DEGH. Residues 883–1041 enclose the Helicase C-terminal domain; the sequence is VLISILHSIR…RAVPPEELLD (159 aa).

The protein in the C-terminal section; belongs to the SNF2/RAD54 helicase family. This sequence in the N-terminal section; belongs to the TET family. JBP2 subfamily. It depends on Fe(2+) as a cofactor.

The protein resides in the nucleus. It carries out the reaction ATP + H2O = ADP + phosphate + H(+). The catalysed reaction is thymine + 2-oxoglutarate + O2 = 5-hydroxymethyluracil + succinate + CO2. Dioxygenase that catalyzes the first step of DNA base J (beta-d-glucosyl-HOMedU) biosynthesis by converting thymine to 5-hydroxymethyluracil (HOMedU). DNA base J is a hypermodified thymidine residue found in the genome of kinetoplastid parasites, which is localized primarily to repetitive DNA, namely the telomeres, and is implicated in the regulation of antigenic variation. Probably also acts as a DNA helicase. Recognizes and binds specific regions of the genome, hydrolyzes ATP and allows the DNA base J de novo synthesis. Involved in initial synthesis of DNA base J, JBP1 being able to act via the basal level of DNA base J and propagate further synthesis. In contrast to JBP1, it does not specifically bind DNA base J, however it binds chromatin. The protein is Bifunctional helicase and thymine dioxygenase JBP2 (JBP2) of Trypanosoma cruzi (strain CL Brener).